The primary structure comprises 772 residues: MGWFTGIACLFWGILLTARANYANGKNNVPRLKLSYKEMLESNNVITFNGLANSSSYHTFLLDEERSRLYVGAKDHIFSFNLVNIKDFQKIVWPVSYTRRDECKWAGKDILKECANFIKVLKAYNQTHLYACGTGAFHPICTYIEVGHHPEDNIFKLQDSHFENGRGKSPYDPKLLTASLLIDGELYSGTAADFMGRDFAIFRTLGHHHPIRTEQHDSRWLNDPRFISAHLIPESDNPEDDKVYFFFRENAIDGEHSGKATHARIGQICKNDFGGHRSLVNKWTTFLKARLICSVPGPNGIDTHFDELQDVFLMNSKDPKNPIVYGVFTTSSNIFKGSAVCMYSMSDVRRVFLGPYAHRDGPNYQWVPYQGRVPYPRPGTCPSKTFGGFDSTKDLPDDVITFARSHPAMYNPVFPINNRPIMIKTDVNYQFTQIVVDRVDAEDGQYDVMFIGTDVGTVLKVVSVPKETWHDLEEVLLEEMTVFREPTTISAMELSTKQQQLYIGSTAGVAQLPLHRCDIYGKACAECCLARDPYCAWDGSSCSRYFPTAKRRTRRQDIRNGDPLTHCSDLQHHDNHHGHSLEERIIYGVENSSTFLECSPKSQRALVYWQFQRRNEDRKEEIRVGDHIIRTEQGLLLRSLQKKDSGNYLCHAVEHGFMQTLLKVTLEVIDTEHLEELLHKDDDGDGSKTKEMSSSMTPSQKVWYRDFMQLINHPNLNTMDEFCEQVWKRDRKQRRQRPGHSQGSSNKWKHMQESKKGRNRRTHEFERAPRSV.

Residues 1–20 form the signal peptide; sequence MGWFTGIACLFWGILLTARA. Positions 31-514 constitute a Sema domain; sequence RLKLSYKEML…STAGVAQLPL (484 aa). N-linked (GlcNAc...) asparagine glycosylation is present at asparagine 53. The cysteines at positions 103 and 114 are disulfide-linked. Asparagine 125 carries N-linked (GlcNAc...) asparagine glycosylation. 4 disulfide bridges follow: cysteine 132–cysteine 141, cysteine 269–cysteine 381, cysteine 293–cysteine 341, and cysteine 517–cysteine 535. The Ig-like C2-type domain occupies 577–665; the sequence is HGHSLEERII…GFMQTLLKVT (89 aa). An N-linked (GlcNAc...) asparagine glycan is attached at asparagine 591. The cysteines at positions 650 and 723 are disulfide-linked. Basic and acidic residues predominate over residues 677 to 691; that stretch reads LLHKDDDGDGSKTKE. Disordered stretches follow at residues 677 to 698 and 729 to 772; these read LLHK…SMTP and RDRK…PRSV. The segment covering 729-738 has biased composition (basic residues); the sequence is RDRKQRRQRP. Basic and acidic residues predominate over residues 750–772; sequence HMQESKKGRNRRTHEFERAPRSV.

Belongs to the semaphorin family. As to quaternary structure, interacts with PLXND1. In terms of tissue distribution, expressed in the dorsal root ganglia.

The protein localises to the secreted. Its function is as follows. May be involved in guiding growing axons towards their targets by forming a molecular boundary that instructs axons to engage in the formation of specific nerve tracts. Binds to neuropilin. Involved in the development of the olfactory system and in neuronal control of puberty. The protein is Semaphorin-3A (Sema3a) of Rattus norvegicus (Rat).